The sequence spans 374 residues: PqqA peptide cyclase (374 aa).

One can recognise a Radical SAM core domain in the interval 4-224 (IEPPMGLLAE…ERLKGVMVID (221 aa)). Positions 18, 22, and 25 each coordinate [4Fe-4S] cluster.

It belongs to the radical SAM superfamily. PqqE family. In terms of assembly, interacts with PqqD. The interaction is necessary for activity of PqqE. Requires [4Fe-4S] cluster as cofactor.

It catalyses the reaction [PQQ precursor protein] + S-adenosyl-L-methionine = E-Y cross-linked-[PQQ precursor protein] + 5'-deoxyadenosine + L-methionine + H(+). It participates in cofactor biosynthesis; pyrroloquinoline quinone biosynthesis. In terms of biological role, catalyzes the cross-linking of a glutamate residue and a tyrosine residue in the PqqA protein as part of the biosynthesis of pyrroloquinoline quinone (PQQ). The sequence is that of PqqA peptide cyclase from Granulibacter bethesdensis (strain ATCC BAA-1260 / CGDNIH1).